Consider the following 261-residue polypeptide: Cytochrome c oxidase subunit 3 (261 aa).

At 1 to 15 (MAHQAHSYHMVDPSP) the chain is on the mitochondrial matrix side. A helical membrane pass occupies residues 16 to 34 (WPIFGAITALLTTSGLIMW). Residues 35–40 (FHYNSI) lie on the Mitochondrial intermembrane side of the membrane. A helical transmembrane segment spans residues 41–66 (ALLTAGLLSMLLVMIQWWRDVVREST). Residues 67 to 72 (FQGHHT) are Mitochondrial matrix-facing. A helical membrane pass occupies residues 73–105 (PTVQKGLRYGMILFITSEAFFFLGFFWAFFHSS). Residues 106-128 (LAPTPELGGQWPPTGIKPLNPLE) are Mitochondrial intermembrane-facing. A helical membrane pass occupies residues 129–152 (VPLLNTAILLASGVTVTWAHHSIT). At 153 to 155 (EGN) the chain is on the mitochondrial matrix side. The helical transmembrane segment at 156 to 183 (RKQAIHALTLTILLGFYFTALQAMEYHE) threads the bilayer. The Mitochondrial intermembrane segment spans residues 184 to 190 (ASFSIAD). A helical transmembrane segment spans residues 191–223 (SVYGSTFFVATGFHGLHVIIGSSFLTICLLRLI). Over 224 to 232 (KFHFTSNHH) the chain is Mitochondrial matrix. Residues 233 to 256 (FGFEAAAWYWHFVDIIWLFLYMSM) traverse the membrane as a helical segment. Residues 257 to 261 (YWWGS) are Mitochondrial intermembrane-facing.

This sequence belongs to the cytochrome c oxidase subunit 3 family. Component of the cytochrome c oxidase (complex IV, CIV), a multisubunit enzyme composed of 14 subunits. The complex is composed of a catalytic core of 3 subunits MT-CO1, MT-CO2 and MT-CO3, encoded in the mitochondrial DNA, and 11 supernumerary subunits COX4I, COX5A, COX5B, COX6A, COX6B, COX6C, COX7A, COX7B, COX7C, COX8 and NDUFA4, which are encoded in the nuclear genome. The complex exists as a monomer or a dimer and forms supercomplexes (SCs) in the inner mitochondrial membrane with NADH-ubiquinone oxidoreductase (complex I, CI) and ubiquinol-cytochrome c oxidoreductase (cytochrome b-c1 complex, complex III, CIII), resulting in different assemblies (supercomplex SCI(1)III(2)IV(1) and megacomplex MCI(2)III(2)IV(2)).

Its subcellular location is the mitochondrion inner membrane. The enzyme catalyses 4 Fe(II)-[cytochrome c] + O2 + 8 H(+)(in) = 4 Fe(III)-[cytochrome c] + 2 H2O + 4 H(+)(out). Functionally, component of the cytochrome c oxidase, the last enzyme in the mitochondrial electron transport chain which drives oxidative phosphorylation. The respiratory chain contains 3 multisubunit complexes succinate dehydrogenase (complex II, CII), ubiquinol-cytochrome c oxidoreductase (cytochrome b-c1 complex, complex III, CIII) and cytochrome c oxidase (complex IV, CIV), that cooperate to transfer electrons derived from NADH and succinate to molecular oxygen, creating an electrochemical gradient over the inner membrane that drives transmembrane transport and the ATP synthase. Cytochrome c oxidase is the component of the respiratory chain that catalyzes the reduction of oxygen to water. Electrons originating from reduced cytochrome c in the intermembrane space (IMS) are transferred via the dinuclear copper A center (CU(A)) of subunit 2 and heme A of subunit 1 to the active site in subunit 1, a binuclear center (BNC) formed by heme A3 and copper B (CU(B)). The BNC reduces molecular oxygen to 2 water molecules using 4 electrons from cytochrome c in the IMS and 4 protons from the mitochondrial matrix. In Coturnix japonica (Japanese quail), this protein is Cytochrome c oxidase subunit 3 (MT-CO3).